A 381-amino-acid chain; its full sequence is MIIKLIFLICFKIVLSINYWVRYNDTVTLNSNINSETEGIFWNFYNNTFNTIATCGKKNNVCECSNYDKSLYNITNNCSLTIFPNNTKIFNTTYQLVYSRNRINYTINLLLPVTSPIITYNCTQSLITCEKTNGTNIHLFLNLNDTINEYTNKSFLNYYWNSSELNNIFLATCIINNTLNSANTTKVINCTNPLLKSYQNYFLENIHTLFYMIIFIVSGITISIFISIITFLSLRKRKKHVEEIESPPPESNEEEQCQHDDTTSIHEPSPREPLLPKPYSRYQYNTPIYYMRPSTQPLNPFPLPKPCPPPKPCPPPKPCPPPKPCPPPKPCPPPKPCPPPKPCPPPESYSPPKPLPSIPLLPNIPPLSTQNISLIHVDRII.

Residues 1–16 (MIIKLIFLICFKIVLS) form the signal peptide. At 17–208 (INYWVRYNDT…QNYFLENIHT (192 aa)) the chain is on the extracellular side. N-linked (GlcNAc...) asparagine; by host glycosylation is found at Asn-24, Asn-73, Asn-77, Asn-85, Asn-91, Asn-104, Asn-121, Asn-133, Asn-144, Asn-176, Asn-183, and Asn-189. 2 disulfide bridges follow: Cys-122-Cys-190 and Cys-129-Cys-173. A helical membrane pass occupies residues 209 to 229 (LFYMIIFIVSGITISIFISII). Over 230 to 381 (TFLSLRKRKK…ISLIHVDRII (152 aa)) the chain is Cytoplasmic. The interval 243–278 (EIESPPPESNEEEQCQHDDTTSIHEPSPREPLLPKP) is disordered. Residues 256–270 (QCQHDDTTSIHEPSP) show a composition bias toward basic and acidic residues. Tandem repeats lie at residues 305-310 (KPCPPP), 311-316 (KPCPPP), 317-322 (KPCPPP), 323-328 (KPCPPP), 329-334 (KPCPPP), 335-340 (KPCPPP), and 341-346 (KPCPPP). The interval 305–334 (KPCPPPKPCPPPKPCPPPKPCPPPKPCPPP) is 7 X 6 AA tandem repeats of K-[LP]-C-[PRS]-[PS]-[PS]. Positions 341 to 362 (KPCPPPESYSPPKPLPSIPLLP) are disordered.

This sequence belongs to the asfivirus CD2 homolog protein family. In terms of assembly, both glycosylated and nonglycosylated forms interact (via C-terminus) with the host AP-1 complex. Post-translationally, cleaved into two fragments of 63 kDa and 26 kDa containing respectively the glycosylated N-terminus and the nonglycosylated C-terminus. A full-length 89-kDa glycosylated form also exists.

The protein resides in the host membrane. It is found in the virion membrane. The protein localises to the host Golgi apparatus. In terms of biological role, may play an immunosuppressive role by inhibiting lymphocyte proliferation and subsequently facilitating viral replication and generalization of infection. Responsible for viral hemadsorption, which may help viral spread. Increases virus replication in the tick vector at the step of virus uptake or replication in the tick gut. May play a role in the host Golgi reorganization to yield viral factories. May play a role in host cell penetration. In African swine fever virus (isolate Warthog/Namibia/Wart80/1980) (ASFV), this protein is CD2 homolog.